The following is a 475-amino-acid chain: Methylenetetrahydrofolate--tRNA-(uracil-5-)-methyltransferase TrmFO (475 aa).

Residue 9–14 (GGGLAG) participates in FAD binding. The disordered stretch occupies residues 427 to 447 (APRNETGRRLRGPEKAALKKR).

It belongs to the MnmG family. TrmFO subfamily. The cofactor is FAD.

It is found in the cytoplasm. The catalysed reaction is uridine(54) in tRNA + (6R)-5,10-methylene-5,6,7,8-tetrahydrofolate + NADH + H(+) = 5-methyluridine(54) in tRNA + (6S)-5,6,7,8-tetrahydrofolate + NAD(+). The enzyme catalyses uridine(54) in tRNA + (6R)-5,10-methylene-5,6,7,8-tetrahydrofolate + NADPH + H(+) = 5-methyluridine(54) in tRNA + (6S)-5,6,7,8-tetrahydrofolate + NADP(+). Catalyzes the folate-dependent formation of 5-methyl-uridine at position 54 (M-5-U54) in all tRNAs. In Methylobacterium radiotolerans (strain ATCC 27329 / DSM 1819 / JCM 2831 / NBRC 15690 / NCIMB 10815 / 0-1), this protein is Methylenetetrahydrofolate--tRNA-(uracil-5-)-methyltransferase TrmFO.